The following is a 353-amino-acid chain: uncharacterized protein (353 aa).

The 66-residue stretch at 18 to 83 folds into the HTH luxR-type domain; that stretch reads NIEFPCLLSE…TLWRDVFLRF (66 aa). Positions 42–61 form a DNA-binding region, H-T-H motif; it reads VNEISKRRNRSIKTVSCQKM. An EAL domain is found at 98–350; the sequence is NSSVLPVVSS…AFVRKLLASL (253 aa).

This is an uncharacterized protein from Escherichia coli (strain K12).